The chain runs to 1272 residues: AF4/FMR2 family member 2 (1272 aa).

Disordered stretches follow at residues 93-183 (IPKN…LTQD) and 200-223 (PQIG…SSGE). Over residues 97–107 (SVPQNPNNKNE) the composition is skewed to polar residues. The span at 151-160 (SKPEWSRDSH) shows a compositional bias: basic and acidic residues. The segment covering 161 to 183 (NPSTVLASQASGQPNKMQTLTQD) has biased composition (polar residues). Residues 212 to 223 (AKEDSNPKSSGE) are compositionally biased toward basic and acidic residues. Residue Ser-391 is modified to Phosphoserine. Disordered stretches follow at residues 418 to 491 (KAKP…KWQL), 535 to 687 (TNAS…DQEE), 779 to 829 (SLHA…PEKK), and 842 to 903 (PPCI…QDKN). Residues 426–438 (VNPPLATPQPPPA) are compositionally biased toward pro residues. Positions 439 to 452 (VQASGGSGSSSESE) are enriched in low complexity. Thr-478 is modified (phosphothreonine). Positions 543-558 (EPKERPLLSLIREKAR) are enriched in basic and acidic residues. The segment covering 576–586 (STTSETVSQRT) has biased composition (polar residues). A compositionally biased stretch (basic and acidic residues) spans 616 to 629 (PKEKESVELHDPPR). Residues 630–640 (GRNKATAHKPA) show a composition bias toward basic residues. Positions 818–829 (PTEVAEKIPEKK) are enriched in basic and acidic residues. Pro residues-rich tracts occupy residues 844–853 (CISPAPPHKP) and 874–883 (FPPPLSPLPE).

It belongs to the AF4 family.

It is found in the nucleus speckle. In terms of biological role, RNA-binding protein. Might be involved in alternative splicing regulation through an interaction with G-quartet RNA structure. The sequence is that of AF4/FMR2 family member 2 (AFF2) from Pongo pygmaeus (Bornean orangutan).